Here is a 265-residue protein sequence, read N- to C-terminus: 3-methyl-2-oxobutanoate hydroxymethyltransferase (265 aa).

Mg(2+) is bound by residues Asp-45 and Asp-84. 3-methyl-2-oxobutanoate-binding positions include 45–46 (DS), Asp-84, and Lys-114. A Mg(2+)-binding site is contributed by Glu-116. Residue Glu-183 is the Proton acceptor of the active site.

Belongs to the PanB family. Homodecamer; pentamer of dimers. Requires Mg(2+) as cofactor.

The protein resides in the cytoplasm. The catalysed reaction is 3-methyl-2-oxobutanoate + (6R)-5,10-methylene-5,6,7,8-tetrahydrofolate + H2O = 2-dehydropantoate + (6S)-5,6,7,8-tetrahydrofolate. The protein operates within cofactor biosynthesis; (R)-pantothenate biosynthesis; (R)-pantoate from 3-methyl-2-oxobutanoate: step 1/2. Its function is as follows. Catalyzes the reversible reaction in which hydroxymethyl group from 5,10-methylenetetrahydrofolate is transferred onto alpha-ketoisovalerate to form ketopantoate. This is 3-methyl-2-oxobutanoate hydroxymethyltransferase from Salinibacter ruber (strain DSM 13855 / M31).